An 822-amino-acid chain; its full sequence is Pentatricopeptide repeat-containing protein At2g18940, chloroplastic (822 aa).

A disordered region spans residues 1–42 (MDGALFPHKPPYPIQSKRPPPSQSSNQSIKFSSATLHLPPPS). The N-terminal 77 residues, 1 to 77 (MDGALFPHKP…SAAARFPSLE (77 aa)), are a transit peptide targeting the chloroplast. Pro residues predominate over residues 8–22 (HKPPYPIQSKRPPPS). Residues 23-37 (QSSNQSIKFSSATLH) show a composition bias toward low complexity. PPR repeat units follow at residues 209–243 (DVRA…GPSP), 244–279 (TLVT…GLKF), 280–314 (DEFT…GYEP), 315–349 (GTVT…SCPA), 350–384 (DSVT…GVMP), 385–419 (NAIT…GCVP), 420–454 (NTCT…GCSP), 455–489 (NRAT…GFEP), 490–524 (DRDT…GFNA), 525–559 (CVTT…GFKP), 560–594 (TETS…QIFP), 595–629 (SWML…GYKP), 630–664 (DMVI…GLSP), 665–699 (DLVT…QLKP), 700–734 (DLVS…GIRP), 735–769 (CIFT…DCRP), and 770–800 (NELT…IKTF).

It belongs to the PPR family. P subfamily.

The protein resides in the plastid. It is found in the chloroplast. The chain is Pentatricopeptide repeat-containing protein At2g18940, chloroplastic from Arabidopsis thaliana (Mouse-ear cress).